We begin with the raw amino-acid sequence, 283 residues long: Probable 3-deoxy-manno-octulosonic acid transferase (283 aa).

It is found in the cytoplasm. It carries out the reaction an alpha-Kdo-(2-&gt;4)-alpha-Kdo-(2-&gt;6)-lipid IVA + CMP-3-deoxy-beta-D-manno-octulosonate = an alpha-Kdo-(2-&gt;4)-alpha-Kdo-(2-&gt;4)-alpha-Kdo-(2-&gt;6)-lipid IVA + CMP + H(+). The catalysed reaction is alpha-Kdo-(2-&gt;4)-alpha-Kdo-(2-&gt;6)-lipid IVA (E. coli) + CMP-3-deoxy-beta-D-manno-octulosonate = alpha-Kdo-(2-&gt;4)-alpha-Kdo-(2-&gt;4)-alpha-Kdo-(2-&gt;6)-lipid IVA + CMP + H(+). The protein operates within bacterial outer membrane biogenesis; LPS core biosynthesis. Its pathway is bacterial outer membrane biogenesis; LOS core biosynthesis. In terms of biological role, involved in the biosynthesis of the core oligosaccharide region of lipopolysaccharide (LPS). Required for the addition of 3-deoxy-D-manno-oct-2-ulosonic acid III (KdoIII) to the KdoII residue of the inner lipopolysaccharide core. May also play a role in a lipooligosaccharide (LOS) biosynthesis pathway. The polypeptide is Probable 3-deoxy-manno-octulosonic acid transferase (Escherichia coli (strain K12)).